We begin with the raw amino-acid sequence, 540 residues long: Transcription initiation factor IIF subunit alpha (540 aa).

Residues 1–26 (MDSQETKVFENVKQENPDEKKPKVEE) are compositionally biased toward basic and acidic residues. Disordered regions lie at residues 1–39 (MDSQ…QSQQ) and 70–106 (IDPS…SSSN). Composition is skewed to polar residues over residues 29 to 39 (SQNNASTQSQQ) and 89 to 106 (APSS…SSSN). A phosphoserine mark is found at S259 and S261. A coiled-coil region spans residues 280–382 (MEGNEEDNKK…REEKLKSRFS (103 aa)). Residues 341–416 (YESDEEDEDP…SSQLQSPNTS (76 aa)) form a disordered region. Residues 359–369 (SEEEVLQEEEE) show a composition bias toward acidic residues. Over residues 381 to 416 (FSANASKTNTPRPLERTPSSVSPVKASSQLQSPNTS) the composition is skewed to polar residues. S399 bears the Phosphoserine mark.

The protein belongs to the TFIIF alpha subunit family. In terms of assembly, component of the fcp1/TFIIF/polII complex via interaction of tfg3 with both tfg1/TFIIF-alpha and tfg2/TFIIF-beta subunits.

Its subcellular location is the nucleus. TFIIF is a general transcription initiation factor that binds to RNA polymerase II and helps to recruit it to the initiation complex in collaboration with TFIIB. It promotes transcription elongation. The chain is Transcription initiation factor IIF subunit alpha (tfg1) from Schizosaccharomyces pombe (strain 972 / ATCC 24843) (Fission yeast).